The following is a 475-amino-acid chain: Ribulose bisphosphate carboxylase large chain (475 aa).

A propeptide spanning residues 1 to 2 (MS) is cleaved from the precursor. Pro3 carries the post-translational modification N-acetylproline. The residue at position 14 (Lys14) is an N6,N6,N6-trimethyllysine. Asn123 and Thr173 together coordinate substrate. Lys175 (proton acceptor) is an active-site residue. Lys177 provides a ligand contact to substrate. Mg(2+) is bound by residues Lys201, Asp203, and Glu204. Lys201 bears the N6-carboxylysine mark. His294 serves as the catalytic Proton acceptor. Residues Arg295, His327, and Ser379 each coordinate substrate.

Belongs to the RuBisCO large chain family. Type I subfamily. As to quaternary structure, heterohexadecamer of 8 large chains and 8 small chains; disulfide-linked. The disulfide link is formed within the large subunit homodimers. Mg(2+) is required as a cofactor. Post-translationally, the disulfide bond which can form in the large chain dimeric partners within the hexadecamer appears to be associated with oxidative stress and protein turnover.

It localises to the plastid. It is found in the chloroplast. The catalysed reaction is 2 (2R)-3-phosphoglycerate + 2 H(+) = D-ribulose 1,5-bisphosphate + CO2 + H2O. It catalyses the reaction D-ribulose 1,5-bisphosphate + O2 = 2-phosphoglycolate + (2R)-3-phosphoglycerate + 2 H(+). Its function is as follows. RuBisCO catalyzes two reactions: the carboxylation of D-ribulose 1,5-bisphosphate, the primary event in carbon dioxide fixation, as well as the oxidative fragmentation of the pentose substrate in the photorespiration process. Both reactions occur simultaneously and in competition at the same active site. The chain is Ribulose bisphosphate carboxylase large chain from Vitis vinifera (Grape).